Consider the following 130-residue polypeptide: Holo-[acyl-carrier-protein] synthase (130 aa).

Residues aspartate 9 and glutamate 58 each contribute to the Mg(2+) site.

The protein belongs to the P-Pant transferase superfamily. AcpS family. Mg(2+) serves as cofactor.

The protein localises to the cytoplasm. The catalysed reaction is apo-[ACP] + CoA = holo-[ACP] + adenosine 3',5'-bisphosphate + H(+). Transfers the 4'-phosphopantetheine moiety from coenzyme A to a Ser of acyl-carrier-protein. The sequence is that of Holo-[acyl-carrier-protein] synthase from Mycolicibacterium paratuberculosis (strain ATCC BAA-968 / K-10) (Mycobacterium paratuberculosis).